Reading from the N-terminus, the 293-residue chain is Elongation factor Ts (293 aa).

The involved in Mg(2+) ion dislocation from EF-Tu stretch occupies residues 80–83 (TDFV).

The protein belongs to the EF-Ts family.

The protein resides in the cytoplasm. Associates with the EF-Tu.GDP complex and induces the exchange of GDP to GTP. It remains bound to the aminoacyl-tRNA.EF-Tu.GTP complex up to the GTP hydrolysis stage on the ribosome. In Burkholderia cenocepacia (strain HI2424), this protein is Elongation factor Ts.